The primary structure comprises 297 residues: Probable endonuclease 4 (297 aa).

The Zn(2+) site is built by histidine 69, histidine 110, glutamate 145, aspartate 179, histidine 182, histidine 214, aspartate 227, histidine 229, and glutamate 259.

This sequence belongs to the AP endonuclease 2 family. Zn(2+) is required as a cofactor.

The enzyme catalyses Endonucleolytic cleavage to 5'-phosphooligonucleotide end-products.. Endonuclease IV plays a role in DNA repair. It cleaves phosphodiester bonds at apurinic or apyrimidinic (AP) sites, generating a 3'-hydroxyl group and a 5'-terminal sugar phosphate. The sequence is that of Probable endonuclease 4 from Bacillus licheniformis (strain ATCC 14580 / DSM 13 / JCM 2505 / CCUG 7422 / NBRC 12200 / NCIMB 9375 / NCTC 10341 / NRRL NRS-1264 / Gibson 46).